A 1052-amino-acid chain; its full sequence is uncharacterized protein (1052 aa).

The Helicase ATP-binding domain occupies 389-561 (WINKGKTFAI…NKGGNYIMIN (173 aa)). 400–407 (SAMGTGKT) contributes to the ATP binding site.

This sequence belongs to the mimivirus R1 family.

This is an uncharacterized protein from Acanthamoeba polyphaga mimivirus (APMV).